An 822-amino-acid polypeptide reads, in one-letter code: uncharacterized protein (822 aa).

Topologically, residues 1 to 13 are cytoplasmic; that stretch reads MCHNSVRSGNKAG. Residues 14–34 form a helical membrane-spanning segment; sequence FLGIKFGSALLSIATGAIAIA. At 35-44 the chain is on the extracellular side; sequence LLCKFHDHEA. Residues 45–65 traverse the membrane as a helical segment; sequence VLIVIVCSTLLYGIPSLISFI. Topologically, residues 66–76 are cytoplasmic; it reads TETVFAPSKFH. Residues 77–97 form a helical membrane-spanning segment; the sequence is IGYFYNVLNFALPLITMGCTV. Over 98–120 the chain is Extracellular; sequence DYFHNTLRSPISVQSESHRVYIT. Residues 121 to 141 traverse the membrane as a helical segment; sequence TLDSLLIFTLFINGIQLGFFL. Topologically, residues 142–822 are cytoplasmic; the sequence is KDGNANNFGS…PVEELVSPSK (681 aa). The tract at residues 271–290 is disordered; sequence RNTQQATKVPTEKKSNHRSS. Residue serine 690 is modified to Phosphoserine. The segment covering 698–712 has biased composition (polar residues); that stretch reads TLQSSHSPTKSTSGN. Disordered stretches follow at residues 698 to 728 and 751 to 783; these read TLQS…STVN and NGEE…GYPE. Residues 761–776 are compositionally biased toward low complexity; that stretch reads QSIQSSSSGSEQESAG.

The protein resides in the membrane. This is an uncharacterized protein from Saccharomyces cerevisiae (strain ATCC 204508 / S288c) (Baker's yeast).